The chain runs to 89 residues: Small ribosomal subunit protein uS15 (89 aa).

It belongs to the universal ribosomal protein uS15 family. In terms of assembly, part of the 30S ribosomal subunit. Forms a bridge to the 50S subunit in the 70S ribosome, contacting the 23S rRNA.

One of the primary rRNA binding proteins, it binds directly to 16S rRNA where it helps nucleate assembly of the platform of the 30S subunit by binding and bridging several RNA helices of the 16S rRNA. Its function is as follows. Forms an intersubunit bridge (bridge B4) with the 23S rRNA of the 50S subunit in the ribosome. In Acaryochloris marina (strain MBIC 11017), this protein is Small ribosomal subunit protein uS15.